Here is a 262-residue protein sequence, read N- to C-terminus: tRNA pseudouridine synthase A (262 aa).

The Nucleophile role is filled by Asp-52. Tyr-103 provides a ligand contact to substrate.

The protein belongs to the tRNA pseudouridine synthase TruA family.

It catalyses the reaction uridine(38/39/40) in tRNA = pseudouridine(38/39/40) in tRNA. In terms of biological role, formation of pseudouridine at positions 38, 39 and 40 in the anticodon stem and loop of transfer RNAs. The chain is tRNA pseudouridine synthase A from Methanococcus maripaludis (strain DSM 14266 / JCM 13030 / NBRC 101832 / S2 / LL).